The following is a 196-amino-acid chain: Potassium-transporting ATPase KdpC subunit (196 aa).

A helical membrane pass occupies residues 17 to 37; it reads LLLLVATAGLGLVYPLAVFAV. The disordered stretch occupies residues 73–93; the sequence is QPRPSAAGDGYDPTASGASNL.

It belongs to the KdpC family. As to quaternary structure, the system is composed of three essential subunits: KdpA, KdpB and KdpC.

It is found in the cell membrane. Its function is as follows. Part of the high-affinity ATP-driven potassium transport (or Kdp) system, which catalyzes the hydrolysis of ATP coupled with the electrogenic transport of potassium into the cytoplasm. This subunit acts as a catalytic chaperone that increases the ATP-binding affinity of the ATP-hydrolyzing subunit KdpB by the formation of a transient KdpB/KdpC/ATP ternary complex. In Kineococcus radiotolerans (strain ATCC BAA-149 / DSM 14245 / SRS30216), this protein is Potassium-transporting ATPase KdpC subunit.